The primary structure comprises 376 residues: GDSL esterase/lipase 2 (376 aa).

The signal sequence occupies residues 1 to 25 (MENSRSTLIIFFAYTTIILIGSINC). Residue N36 is glycosylated (N-linked (GlcNAc...) asparagine). The Nucleophile role is filled by S46. N-linked (GlcNAc...) asparagine glycans are attached at residues N186 and N205. Active-site residues include D340 and H343. The N-linked (GlcNAc...) asparagine glycan is linked to N362.

The protein belongs to the 'GDSL' lipolytic enzyme family. Expressed seedlings, roots and stems.

It is found in the secreted. Functionally, involved in the resistance to the necrotropic bacteria Erwinia carotovora, probably via negative regulation of auxin signaling. Possesses lipase and antimicrobial activities, inhibiting germination of fungal spores (e.g. Alternaria brassicicola). This is GDSL esterase/lipase 2 (GLIP2) from Arabidopsis thaliana (Mouse-ear cress).